The chain runs to 565 residues: MELEHESKRPLYIPYSGPILLEFPLLNKGSAFTEEERRNFNLHGLLPEAVETIEEQAERAYRQYLDFKNDADKHIYLRNIQDTNETLFYRLLDAHLNEMMPIIYTPTVGEACEHFSDIYRRARGLFISHPNKAHIDDMLQNATKQNVKVIVVTDGERILGLGDQGIGGMGIPIGKLSLYTSCGGISPAYTLPVVLDVGTNNPQRLNDPLYMGWRHPRITGKEYDEFVDEFIQAVKRRWPNVLLQFEDFAQKNAMPLLNRYRHEICCFNDDIQGTAAVTLGSLIAASRAAGRQLKDQTVTFLGAGSAGCGIAEQIVAQMKSEGLSDEQARARIFMVDRFGLLTDKLPNLLDFQNKLVQKSSSLAKWDVNNDSISLLDVVRNAKPTVLIGVSGQAGLFTEEIIREMHKHCERPIVMPLSNPTSRVEARPEDIINWTDGAALVATGSPFNPVKYKDQEYPIAQCNNAYIFPGIGLGVIASGAKLVTDGMLMAASRTLANCSPLAQEGQGPLLPLIDDIQEVSRKIAKQVAKEAQIQGVATVTSDGALDEAIERNFWKPEYRVYKRTSF.

Catalysis depends on tyrosine 104, which acts as the Proton donor. Residue arginine 157 participates in NAD(+) binding. The active-site Proton acceptor is lysine 175. The a divalent metal cation site is built by glutamate 246, aspartate 247, and aspartate 270. NAD(+) is bound by residues aspartate 270 and asparagine 418.

Belongs to the malic enzymes family. Homotetramer. It depends on Mg(2+) as a cofactor. Mn(2+) serves as cofactor.

The catalysed reaction is (S)-malate + NAD(+) = pyruvate + CO2 + NADH. It carries out the reaction oxaloacetate + H(+) = pyruvate + CO2. This Photorhabdus laumondii subsp. laumondii (strain DSM 15139 / CIP 105565 / TT01) (Photorhabdus luminescens subsp. laumondii) protein is NAD-dependent malic enzyme.